Here is a 278-residue protein sequence, read N- to C-terminus: Large ribosomal subunit protein uL2 (278 aa).

Residues 223–278 (RGSAMNPNDHPHGGGEGKAPVGRKAPMTPWGKKALGVKTRNKKKASTKLIVRRRTK) form a disordered region. Positions 261–278 (TRNKKKASTKLIVRRRTK) are enriched in basic residues.

Belongs to the universal ribosomal protein uL2 family. Part of the 50S ribosomal subunit. Forms a bridge to the 30S subunit in the 70S ribosome.

In terms of biological role, one of the primary rRNA binding proteins. Required for association of the 30S and 50S subunits to form the 70S ribosome, for tRNA binding and peptide bond formation. It has been suggested to have peptidyltransferase activity; this is somewhat controversial. Makes several contacts with the 16S rRNA in the 70S ribosome. The protein is Large ribosomal subunit protein uL2 of Spiroplasma kunkelii.